Reading from the N-terminus, the 38-residue chain is MFKTVQKEPIPLTENFSKFSPLEAKSCWWGFIILFLAF.

This is an uncharacterized protein from Acidianus two-tailed virus (ATV).